The primary structure comprises 278 residues: Mediator of RNA polymerase II transcription subunit 4 (278 aa).

Residues 57–88 adopt a coiled-coil conformation; sequence HARILTLRAQVEALEEQKKSSVTALATLRHEL. Disordered regions lie at residues 120 to 181 and 240 to 278; these read VPPT…EEEE and VEAP…DLDD. Composition is skewed to basic and acidic residues over residues 124–142 and 160–172; these read YRER…KDDA and DAPK…DNKP. Residues 250–268 show a composition bias toward low complexity; the sequence is AEPVQAQAPRPARPAQPQA.

It belongs to the Mediator complex subunit 4 family. As to quaternary structure, component of the Mediator complex.

It localises to the nucleus. Component of the Mediator complex, a coactivator involved in the regulated transcription of nearly all RNA polymerase II-dependent genes. Mediator functions as a bridge to convey information from gene-specific regulatory proteins to the basal RNA polymerase II transcription machinery. Mediator is recruited to promoters by direct interactions with regulatory proteins and serves as a scaffold for the assembly of a functional preinitiation complex with RNA polymerase II and the general transcription factors. This Phaeosphaeria nodorum (strain SN15 / ATCC MYA-4574 / FGSC 10173) (Glume blotch fungus) protein is Mediator of RNA polymerase II transcription subunit 4 (MED4).